A 552-amino-acid polypeptide reads, in one-letter code: HTH-type transcriptional regulator SgrR (552 aa).

The HTH marR-type domain maps to 1–116 (MPSGRLQQQF…LISHLGRSFR (116 aa)). The H-T-H motif DNA-binding region spans 26–49 (LNELADLLNCSRRHMRTLLNTMQA). A solute-binding region spans residues 163–493 (ELEADIAHHW…RDWQGDAAQW (331 aa)).

Activates the small RNA gene sgrS under glucose-phosphate stress conditions as well as yfdZ. Represses its own transcription under both stress and non-stress conditions. Might act as a sensor of the intracellular accumulation of phosphoglucose by binding these molecules in its C-terminal solute-binding domain. The protein is HTH-type transcriptional regulator SgrR of Salmonella typhimurium (strain LT2 / SGSC1412 / ATCC 700720).